We begin with the raw amino-acid sequence, 551 residues long: MMALVRDRRAHYVMSIVIRWVHCFSSSLRGTFGTRWEAMKAKATELRVCCARRKREAREFKPPQMRGSTRLNISDDLKIGFFSTDHATQTDSSEILSVKELSSSTQKLAQMMKSLQVDFGFLKQLLQLKFEDRLKEESLSLFTILHDRILEIEKHYQQNEDKMRKSFNQQLADAIAVIKGMYQQFFEVEEENVSLQDASTVKTNILLRKLKEKEEVIKELKEELDQYKDFGFHKMESFAKETSSPKSNLEKENLEYKVENERLLQIISELEEEIQINLKENSGLEDELISMKEMAEKDHKTIQKLMDSRDRLREELHYEKSLVQDVINKQKEDKEMRKKYGSLSVKVARSAKGREASLSPWPKSPPSTTALRPHSATMSVSSAGAQKAKMPKKALKEDQAVVEDKHGLESQIEALKANLENEKKKVERFRKEADRLNKSWEKRFFILRNSFHVLKNEMFTRHTLFRQFAVLADTSFNYIKVKPLLVQSRTTMTAISSSSHCTSSIDGKHVDVVSDQAALQLSPKGKLSESPKEESLEEPSMRQSSPAETVD.

The transit peptide at 1-36 (MMALVRDRRAHYVMSIVIRWVHCFSSSLRGTFGTRW) directs the protein to the mitochondrion. Residues 203 to 315 (TNILLRKLKE…MDSRDRLREE (113 aa)) are a coiled coil. The segment at 354–389 (REASLSPWPKSPPSTTALRPHSATMSVSSAGAQKAK) is disordered. A compositionally biased stretch (polar residues) spans 366–384 (PSTTALRPHSATMSVSSAG). The stretch at 405–439 (KHGLESQIEALKANLENEKKKVERFRKEADRLNKS) forms a coiled coil. Positions 519–551 (LQLSPKGKLSESPKEESLEEPSMRQSSPAETVD) are disordered. Positions 541-551 (MRQSSPAETVD) are enriched in polar residues.

In terms of assembly, interacts with NOD2.

It is found in the mitochondrion. This is an uncharacterized protein from Homo sapiens (Human).